Consider the following 289-residue polypeptide: MVTKRVQRMMSAAAACIPLLLGSPTLYAQTSAVQQKLAALEKSSGGRLGVALIDTADNTQVLYRGDERFPMCSTSKVMAAAAVLKQSETQKQLLNQPVEIKPADLVNYNPIAEKHVNGTMTLAELSAAALQYSDNTAMNKLIAQLGGPGGVTAFARAIGDETFRLDRTEPTLNTAIPGDPRDTTTARAGADVASLRWVMRWAKPSGAVGDVAQRQYDRAAGIRAGLPTSWTVGDKTGSGDYGTTNDIAVIWPQGRAPLVLVTYFTQPQQNAESRRDVLASAARIIAEGL.

The first 28 residues, 1–28 (MVTKRVQRMMSAAAACIPLLLGSPTLYA), serve as a signal peptide directing secretion. The Acyl-ester intermediate role is filled by Ser-73. 235 to 237 (KTG) serves as a coordination point for substrate.

It belongs to the class-A beta-lactamase family.

It carries out the reaction a beta-lactam + H2O = a substituted beta-amino acid. With respect to regulation, inhibited 16-fold better by the beta-lactamase inhibitor tazobactam than by clavulanic acid. In terms of biological role, hydrolyzes beta-lactam antibiotics such as penicillin G, carbenicillin, cephaloridine, cefoxitin, cefotaxime, ceftazidime, and aztreonam. Has especially increased relative hydrolysis rates for cephalothin, cephaloridine, cefotaxime and ceftizoxime. The polypeptide is Beta-lactamase Toho-2 (bla) (Escherichia coli).